A 374-amino-acid polypeptide reads, in one-letter code: UDP-N-acetylglucosamine--N-acetylmuramyl-(pentapeptide) pyrophosphoryl-undecaprenol N-acetylglucosamine transferase (374 aa).

UDP-N-acetyl-alpha-D-glucosamine is bound by residues threonine 14 to glycine 16, asparagine 125, arginine 168, serine 196, and glutamine 297.

This sequence belongs to the glycosyltransferase 28 family. MurG subfamily.

It is found in the cell inner membrane. The catalysed reaction is di-trans,octa-cis-undecaprenyl diphospho-N-acetyl-alpha-D-muramoyl-L-alanyl-D-glutamyl-meso-2,6-diaminopimeloyl-D-alanyl-D-alanine + UDP-N-acetyl-alpha-D-glucosamine = di-trans,octa-cis-undecaprenyl diphospho-[N-acetyl-alpha-D-glucosaminyl-(1-&gt;4)]-N-acetyl-alpha-D-muramoyl-L-alanyl-D-glutamyl-meso-2,6-diaminopimeloyl-D-alanyl-D-alanine + UDP + H(+). Its pathway is cell wall biogenesis; peptidoglycan biosynthesis. Its function is as follows. Cell wall formation. Catalyzes the transfer of a GlcNAc subunit on undecaprenyl-pyrophosphoryl-MurNAc-pentapeptide (lipid intermediate I) to form undecaprenyl-pyrophosphoryl-MurNAc-(pentapeptide)GlcNAc (lipid intermediate II). The chain is UDP-N-acetylglucosamine--N-acetylmuramyl-(pentapeptide) pyrophosphoryl-undecaprenol N-acetylglucosamine transferase from Rhodopseudomonas palustris (strain BisA53).